A 404-amino-acid chain; its full sequence is Cysteine desulfurase IscS (404 aa).

Pyridoxal 5'-phosphate-binding positions include 75–76 (AT), Asn-155, Gln-183, and 203–205 (SAH). Lys-206 bears the N6-(pyridoxal phosphate)lysine mark. Thr-243 is a pyridoxal 5'-phosphate binding site. The active-site Cysteine persulfide intermediate is the Cys-328. Cys-328 serves as a coordination point for [2Fe-2S] cluster.

It belongs to the class-V pyridoxal-phosphate-dependent aminotransferase family. NifS/IscS subfamily. In terms of assembly, homodimer. Forms a heterotetramer with IscU, interacts with other sulfur acceptors. Pyridoxal 5'-phosphate serves as cofactor.

Its subcellular location is the cytoplasm. The catalysed reaction is (sulfur carrier)-H + L-cysteine = (sulfur carrier)-SH + L-alanine. The protein operates within cofactor biosynthesis; iron-sulfur cluster biosynthesis. Functionally, master enzyme that delivers sulfur to a number of partners involved in Fe-S cluster assembly, tRNA modification or cofactor biosynthesis. Catalyzes the removal of elemental sulfur atoms from cysteine to produce alanine. Functions as a sulfur delivery protein for Fe-S cluster synthesis onto IscU, an Fe-S scaffold assembly protein, as well as other S acceptor proteins. This chain is Cysteine desulfurase IscS, found in Pseudomonas putida (strain ATCC 700007 / DSM 6899 / JCM 31910 / BCRC 17059 / LMG 24140 / F1).